The primary structure comprises 370 residues: Gibberellin 3-beta-dioxygenase 2-1 (370 aa).

One can recognise a Fe2OG dioxygenase domain in the interval 205–306; the sequence is MTATMHLNWY…RISLGYFLGP (102 aa). Fe cation is bound by residues His229, Asp231, and His287. Arg297 is a catalytic residue.

It belongs to the iron/ascorbate-dependent oxidoreductase family. GA3OX subfamily. L-ascorbate is required as a cofactor. It depends on Fe cation as a cofactor. In terms of tissue distribution, expressed in internodes, nodes and the ear of the elongating stem.

It catalyses the reaction gibberellin A20 + 2-oxoglutarate + O2 = gibberellin A1 + succinate + CO2. In terms of biological role, converts the inactive gibberellin precursors GA9 and GA20 in the bioactives gibberellins GA4 and GA1. Also accepts GA15, GA44, the 2,3-unsaturated GA5 and 2,3-dihydroGA9 as substrate. No activity with GA12, GA53, GA24, GA19 and GA25. Also possesses 2-beta-hydroxylase, 2,3-desaturase, 2,3-epoxidase and 13-hydroxylase activities. In Triticum aestivum (Wheat), this protein is Gibberellin 3-beta-dioxygenase 2-1 (GA3ox2-1).